Consider the following 201-residue polypeptide: Ribosomal RNA small subunit methyltransferase G (201 aa).

S-adenosyl-L-methionine-binding positions include Gly-71, Phe-76, 120–121, and Arg-134; that span reads LE.

This sequence belongs to the methyltransferase superfamily. RNA methyltransferase RsmG family.

It is found in the cytoplasm. The enzyme catalyses guanosine(527) in 16S rRNA + S-adenosyl-L-methionine = N(7)-methylguanosine(527) in 16S rRNA + S-adenosyl-L-homocysteine. Specifically methylates the N7 position of guanine in position 527 of 16S rRNA. The polypeptide is Ribosomal RNA small subunit methyltransferase G (Rhodospirillum rubrum (strain ATCC 11170 / ATH 1.1.1 / DSM 467 / LMG 4362 / NCIMB 8255 / S1)).